The following is a 169-amino-acid chain: Glycine-rich RNA-binding protein 10 (169 aa).

Residues 6-84 form the RRM domain; it reads YRCFVGGLAW…RTITVNEAQS (79 aa). Disordered stretches follow at residues 80–101 and 121–169; these read NEAQ…YGGR and GYGS…GGGW. Residues 85–101 are compositionally biased toward gly residues; it reads RGGGGGGGRGGGGYGGR.

In terms of tissue distribution, expressed only in roots and stems.

In terms of biological role, possibly has a role in RNA transcription or processing during stress. The polypeptide is Glycine-rich RNA-binding protein 10 (GRP10) (Brassica napus (Rape)).